A 401-amino-acid polypeptide reads, in one-letter code: Phosphoglycerate kinase (401 aa).

Residues D24–N26, R40, H63–R66, R122, and R155 each bind substrate. Residues K206, G297, E328, and G357–S360 contribute to the ATP site.

This sequence belongs to the phosphoglycerate kinase family. In terms of assembly, monomer.

It localises to the cytoplasm. It catalyses the reaction (2R)-3-phosphoglycerate + ATP = (2R)-3-phospho-glyceroyl phosphate + ADP. Its pathway is carbohydrate degradation; glycolysis; pyruvate from D-glyceraldehyde 3-phosphate: step 2/5. This chain is Phosphoglycerate kinase, found in Gloeothece citriformis (strain PCC 7424) (Cyanothece sp. (strain PCC 7424)).